The chain runs to 299 residues: MTPQCQSYLQQFETYMQSERQLSAHTVRNYMYELQRGSELLPEGVDLLNVGREHWQQVLAKLHRKGLSPRSLSLWLSAIKQWGEFLLRSGVIELNPAKGLSAPKQAKPLPKNIDVDSISHLLAIEGNDPLTLRDKAIMELFYSSGLRLAELAALDLSSVQYDQHEVRVLGKGNKERIVPVGRYAIEAISAWLKCRKQISCEDNALFVTEKGKRLSHRSIQARMSKWGQEQALSMRVHPHKLRHSFATHMLESSADLRAVQELLGHENLSTTQIYTSLDFQHLAKVYDNAHPRAKKQQDK.

Residues 3-87 (PQCQSYLQQF…AIKQWGEFLL (85 aa)) form the Core-binding (CB) domain. One can recognise a Tyr recombinase domain in the interval 108 to 287 (PLPKNIDVDS…DFQHLAKVYD (180 aa)). Active-site residues include Arg147, Lys171, His239, Arg242, and His265. Tyr274 functions as the O-(3'-phospho-DNA)-tyrosine intermediate in the catalytic mechanism.

Belongs to the 'phage' integrase family. XerC subfamily. Forms a cyclic heterotetrameric complex composed of two molecules of XerC and two molecules of XerD.

Its subcellular location is the cytoplasm. In terms of biological role, site-specific tyrosine recombinase, which acts by catalyzing the cutting and rejoining of the recombining DNA molecules. The XerC-XerD complex is essential to convert dimers of the bacterial chromosome into monomers to permit their segregation at cell division. It also contributes to the segregational stability of plasmids. The protein is Tyrosine recombinase XerC of Shewanella sp. (strain ANA-3).